Consider the following 321-residue polypeptide: Mitochondrial coenzyme A transporter SLC25A42 (321 aa).

Solcar repeat units lie at residues 33-119 (RSVL…YKGI), 131-216 (LPPV…LKKT), and 226-314 (PFPY…TQIL). 6 helical membrane-spanning segments follow: residues 35 to 55 (VLNSLVSGAFAGAVAKTAVAP), 91 to 111 (LWRGNSATMVRVIPYAAIQFC), 137 to 154 (LLAGSLAGTTAAIITYPL), 191 to 208 (GFTPTILGVVPYAGLSFF), 232 to 252 (LVFGACAGLIGQSASYPLDVV), and 295 to 315 (VKGPIAVGISFMTFDLTQILL).

Belongs to the mitochondrial carrier (TC 2.A.29) family.

Its subcellular location is the mitochondrion inner membrane. The catalysed reaction is ADP(out) + CoA(in) = ADP(in) + CoA(out). It catalyses the reaction 3'-dephospho-CoA(in) + ADP(out) = 3'-dephospho-CoA(out) + ADP(in). The enzyme catalyses adenosine 3',5'-bisphosphate(in) + ADP(out) = adenosine 3',5'-bisphosphate(out) + ADP(in). It carries out the reaction AMP(in) + ADP(out) = AMP(out) + ADP(in). The catalysed reaction is dADP(in) + ADP(out) = dADP(out) + ADP(in). It catalyses the reaction ADP(in) + ATP(out) = ADP(out) + ATP(in). In terms of biological role, mitochondrial carrier mediating the transport of coenzyme A (CoA) in mitochondria in exchange for intramitochondrial (deoxy)adenine nucleotides and adenosine 3',5'-diphosphate. The sequence is that of Mitochondrial coenzyme A transporter SLC25A42 (slc25a42) from Danio rerio (Zebrafish).